The chain runs to 700 residues: MGVRGLHGFVASSCPHVCTVVNFKELAERHRSQHPGGTPTIVVDAMCCLRYWYTPESWVCGGQWREYYSSLREFVRTFTAVGIKLIFFFDGMVEQSKRDEWVKRRLKNNREIAKIFHYIKSRREQPGRNMFFIPSGLAIFTRFALKALGQETLCSLQEADYEVASYGFQNNCLGILGEDTDYLIYDTCPYFSISELSLDSLDTVMLCREKLCQSLGLHLADLPLLACLLGNDVIPEGMFESFRYKCLTSYASVRESCDRKGNVILAVAEHISKVLRLHQGEKKLEEMLPLGPNKALFYKGVASYLLPGQKSPWFIQKPEDVVTLDKQVLSMSSDPESKQEFPVCMDSESKQKLPVGTDPEFNLEAPMCTNTEVKQEDPVNVGPEAKHQVTVVLDPEILKVARAQHVQAESYLVYSVMSSGEVECSNSLEDATDQALPSQAFVYRPVRQRVYSLLLGGGGGGSSTGPAVKEWFVYSGNPLRQPDLVRPLQMNIPGGTPSLRQLWLSQEPGIQAQRLDTLLACFDLSSSREELQAVERPFQALCCLLVYLFVQVDTLCLEDLHAFIAQALCLQGKPTMELADLQLDHIDPRAVQLATLLVRGLTTLVLVNGACGSPWEMADFMPWHLFDGKLFHQKYLQSEKGYTAEVLVEQNRSHVTRFHTLKSVVCKACGKESRPIVSRRHWRPHHAGSRQYEPDQWRRY.

Belongs to the constitutive coactivator of PPAR-gamma family. As to quaternary structure, interacts with ESR1 and RXRA. Interacts with PPARG; in a ligand-independent manner.

The protein resides in the nucleus. Its function is as follows. Functions as a transactivator of PPARG and ESR1. Functions in adipogenesis through PPARG activation. This chain is Constitutive coactivator of peroxisome proliferator-activated receptor gamma (FAM120B), found in Bos taurus (Bovine).